We begin with the raw amino-acid sequence, 771 residues long: Probable exo-1,4-beta-xylosidase bxlB (771 aa).

The first 25 residues, 1 to 25 (MAHITSWHYGNAIALLVSLAPGALS), serve as a signal peptide directing secretion. N-linked (GlcNAc...) asparagine glycosylation occurs at N67. Residue D293 is part of the active site. N-linked (GlcNAc...) asparagine glycans are attached at residues N305, N345, N423, and N464.

This sequence belongs to the glycosyl hydrolase 3 family.

The protein localises to the secreted. It carries out the reaction Hydrolysis of (1-&gt;4)-beta-D-xylans, to remove successive D-xylose residues from the non-reducing termini.. It participates in glycan degradation; xylan degradation. Functionally, xylan 1,4-beta-xylosidase involved in the hydrolysis of xylan, a major structural heterogeneous polysaccharide found in plant biomass representing the second most abundant polysaccharide in the biosphere, after cellulose. This chain is Probable exo-1,4-beta-xylosidase bxlB (bxlB), found in Aspergillus fumigatus (strain CBS 144.89 / FGSC A1163 / CEA10) (Neosartorya fumigata).